Consider the following 582-residue polypeptide: TRAF-type zinc finger domain-containing protein 1 (582 aa).

N-acetylalanine is present on Ala2. The segment at 27 to 103 (IHEIHCQRNI…DLELSILKLK (77 aa)) adopts a TRAF-type zinc-finger fold. Position 191 is a phosphoserine (Ser191). The disordered stretch occupies residues 217–236 (EQERQERNRGQQPPKEGGEE). A phosphoserine mark is found at Ser278, Ser320, Ser326, Ser327, Ser409, Ser415, Ser430, and Ser470. The disordered stretch occupies residues 401–582 (TEGIPRLDSQ…AGDAEEEEEE (182 aa)). 2 stretches are compositionally biased toward polar residues: residues 454–471 (PINN…STSG) and 486–495 (LSNSDSQDIQ).

In terms of assembly, interacts with MAVS, TICAM1, TRAF1, TRAF2, TRAF3. Interacts with TRAF6.

Its function is as follows. Negative feedback regulator that controls excessive innate immune responses. Regulates both Toll-like receptor 4 (TLR4) and DDX58/RIG1-like helicases (RLH) pathways. May inhibit the LTR pathway by direct interaction with TRAF6 and attenuation of NF-kappa-B activation. May negatively regulate the RLH pathway downstream from MAVS and upstream of NF-kappa-B and IRF3. This chain is TRAF-type zinc finger domain-containing protein 1 (TRAFD1), found in Homo sapiens (Human).